The chain runs to 237 residues: Putative ATP-binding protein BMEII0108 (237 aa).

The 201-residue stretch at 5-205 (ISFNNVVMRY…DLPYPRTEAI (201 aa)) folds into the ABC transporter domain. ATP is bound at residue 37-44 (GPSGCGKS).

Belongs to the ABC transporter superfamily. The complex is composed of two ATP-binding proteins (BMEII0108), two transmembrane proteins (BMEII0107) and a solute-binding protein (BMEII0109).

Its subcellular location is the cell inner membrane. Probably part of an ABC transporter complex. Probably Responsible for energy coupling to the transport system. The chain is Putative ATP-binding protein BMEII0108 from Brucella melitensis biotype 1 (strain ATCC 23456 / CCUG 17765 / NCTC 10094 / 16M).